Consider the following 384-residue polypeptide: Zinc metalloproteinase nas-12 (384 aa).

A signal peptide spans 1–25 (MLYIPQFSIYFCLGYLLLFCKISNA). The Peptidase M12A domain occupies 73-271 (VSIKGSSMNR…EKLNRLGQCG (199 aa)). 5 disulfide bridges follow: cysteine 116–cysteine 270, cysteine 137–cysteine 156, cysteine 287–cysteine 325, cysteine 296–cysteine 318, and cysteine 305–cysteine 322. Histidine 164 is a binding site for Zn(2+). Glutamate 165 is an active-site residue. Residues histidine 168 and histidine 174 each coordinate Zn(2+). A ShKT 1 domain is found at 287-325 (CQDVATAVSCEGNRRRGMCKNPFYKQMMIKSCQKTCRLC). A glycan (N-linked (GlcNAc...) asparagine) is linked at asparagine 340. 3 cysteine pairs are disulfide-bonded: cysteine 348–cysteine 384, cysteine 355–cysteine 377, and cysteine 364–cysteine 381. The 37-residue stretch at 348-384 (CEDKHPRCDIYSHNGFCTLPFYDDVRYQLCAKTCNLC) folds into the ShKT 2 domain.

Zn(2+) is required as a cofactor. In terms of tissue distribution, expressed in pharyngeal glands.

It localises to the secreted. Its function is as follows. Metalloprotease. The sequence is that of Zinc metalloproteinase nas-12 (nas-12) from Caenorhabditis elegans.